A 124-amino-acid chain; its full sequence is Protein CYSTEINE-RICH TRANSMEMBRANE MODULE 10 (124 aa).

A disordered region spans residues 1–103 (MSYQDPQHPV…PKNKKDKKDS (103 aa)). Pro residues-rich tracts occupy residues 27–40 (AGYP…PPQY) and 65–88 (GYPP…PPPH). Residues 101 to 118 (KDSGGFMEGCLAMLCCCV) traverse the membrane as a helical segment.

Belongs to the CYSTM1 family. Heterodimers. Interacts with CYSTM7 and WIH1/CYSTM13. As to expression, mostly expressed in stems and,at low levels, in stems, roots, flowers, siliques and leaves.

It localises to the cell membrane. The protein resides in the cytoplasm. Its function is as follows. Involved in resistance to abiotic stress. This Arabidopsis thaliana (Mouse-ear cress) protein is Protein CYSTEINE-RICH TRANSMEMBRANE MODULE 10.